Consider the following 3746-residue polypeptide: N-(5-amino-5-carboxypentanoyl)-L-cysteinyl-D-valine synthase (3746 aa).

Positions 299–711 (EEVVERHEDK…GRADFQIKLR (413 aa)) are adenylation (A) domain 1. Residues 818–895 (DLRGDTEIAL…RMADLLQNKQ (78 aa)) form the Carrier 1 domain. An O-(pantetheine 4'-phosphoryl)serine modification is found at Ser-855. The condensation (C) domain 1 stretch occupies residues 918 to 1372 (NIYLANSLQQ…YLSSIQLEQL (455 aa)). The segment at 1391-1801 (FENEASQKPD…GRNDFQVKIR (411 aa)) is adenylation (A) domain 2. A Carrier 2 domain is found at 1902-1979 (PPRSEIERSL…AQTHLILNDA (78 aa)). O-(pantetheine 4'-phosphoryl)serine is present on Ser-1939. The tract at residues 1994 to 2434 (QMIPVSRAQE…SELSAEGINE (441 aa)) is condensation (C) domain 2. The segment at 2478 to 2883 (AFLAAEKIAV…GRGDLQIKMR (406 aa)) is adenylation (A) domain 3. The region spanning 2991 to 3066 (PPRNIIEAKM…ALHDHVFMKD (76 aa)) is the Carrier 3 domain. O-(pantetheine 4'-phosphoryl)serine is present on Ser-3026. The tract at residues 3084 to 3500 (GEAPLLPIQD…NKILDGRASQ (417 aa)) is epimerase (E) domain. Positions 3530 to 3732 (TLFLLPPGEG…FSWVGNPQQV (203 aa)) are thioesterase (TE) domain.

Belongs to the NRP synthetase family. It depends on pantetheine 4'-phosphate as a cofactor. Mg(2+) serves as cofactor.

The protein resides in the cytoplasm. Its subcellular location is the cytosol. It localises to the vacuole membrane. The catalysed reaction is L-2-aminoadipate + L-valine + L-cysteine + 3 ATP + H2O = N-[(5S)-5-amino-5-carboxypentanoyl]-L-cysteinyl-D-valine + 3 AMP + 3 diphosphate + 3 H(+). The protein operates within antibiotic biosynthesis; penicillin G biosynthesis; penicillin G from L-alpha-aminoadipate and L-cysteine and L-valine: step 1/3. In terms of biological role, nonribosomal peptide synthetase; part of the gene cluster that mediates the biosynthesis of penicillin, the world's most important antibiotic. The trimodular NRPS acvA produces the tripeptide N-[(5S)-5-amino-5-carboxypentanoyl]-L-cysteinyl-D-valine (LLD-ACV or ACV) via condensation of the 3 residues L-2-aminoadipate, L-cysteine and L-valine. The precursor amino acids for penicillin biosynthesis are withdrawn from the vacuolar amino acid pool by the MFS-type transporter penV. Each of the constituent amino acids of the tripeptide ACV are activated as aminoacyl-adenylates with peptide bonds formed through the participation of amino acid thioester intermediates. The penicillin biosynthesis occurs via 3 enzymatic steps, the first corresponding to the production of the tripeptide N-[(5S)-5-amino-5-carboxypentanoyl]-L-cysteinyl-D-valine (LLD-ACV or ACV) by the NRPS acvA. The tripeptide ACV is then cyclized to isopenicillin N (IPN) by the isopenicillin N synthase ipnA that forms the beta-lactam nucleus. Finally, the alpha-aminoadipyl side chain is exchanged for phenylacetic acid by the isopenicillin N acyltransferase aatA to yield penicillin in the peroxisomal matrix. This chain is N-(5-amino-5-carboxypentanoyl)-L-cysteinyl-D-valine synthase, found in Penicillium chrysogenum (Penicillium notatum).